The primary structure comprises 513 residues: 2-isopropylmalate synthase (513 aa).

The 265-residue stretch at 4 to 268 (IKIFDTTLRD…ETGIRTELIY (265 aa)) folds into the Pyruvate carboxyltransferase domain. Mn(2+) is bound by residues aspartate 13, histidine 203, histidine 205, and asparagine 239. Residues 392-513 (RLVHFHVHTG…GLLRKNGGVE (122 aa)) form a regulatory domain region.

This sequence belongs to the alpha-IPM synthase/homocitrate synthase family. LeuA type 1 subfamily. As to quaternary structure, homodimer. The cofactor is Mn(2+).

Its subcellular location is the cytoplasm. The enzyme catalyses 3-methyl-2-oxobutanoate + acetyl-CoA + H2O = (2S)-2-isopropylmalate + CoA + H(+). Its pathway is amino-acid biosynthesis; L-leucine biosynthesis; L-leucine from 3-methyl-2-oxobutanoate: step 1/4. In terms of biological role, catalyzes the condensation of the acetyl group of acetyl-CoA with 3-methyl-2-oxobutanoate (2-ketoisovalerate) to form 3-carboxy-3-hydroxy-4-methylpentanoate (2-isopropylmalate). This Thermotoga neapolitana (strain ATCC 49049 / DSM 4359 / NBRC 107923 / NS-E) protein is 2-isopropylmalate synthase.